The sequence spans 397 residues: Bifunctional enzyme IspD/IspF (397 aa).

A 2-C-methyl-D-erythritol 4-phosphate cytidylyltransferase region spans residues 1-236; it reads MSIAAIILAA…LKGMQIFPDI (236 aa). Residues 237-397 are 2-C-methyl-D-erythritol 2,4-cyclodiphosphate synthase; it reads RTGNGYDVHS…TVIYPGEIPK (161 aa). A divalent metal cation-binding residues include Asp-243 and His-245. 4-CDP-2-C-methyl-D-erythritol 2-phosphate contacts are provided by residues 243–245 and 269–270; these read DVH and HS. Position 277 (His-277) interacts with a divalent metal cation. Residues 291 to 293, 367 to 370, Phe-374, and Arg-377 contribute to the 4-CDP-2-C-methyl-D-erythritol 2-phosphate site; these read DIG and TTNE.

The protein in the N-terminal section; belongs to the IspD/TarI cytidylyltransferase family. IspD subfamily. It in the C-terminal section; belongs to the IspF family. It depends on a divalent metal cation as a cofactor.

It catalyses the reaction 2-C-methyl-D-erythritol 4-phosphate + CTP + H(+) = 4-CDP-2-C-methyl-D-erythritol + diphosphate. The catalysed reaction is 4-CDP-2-C-methyl-D-erythritol 2-phosphate = 2-C-methyl-D-erythritol 2,4-cyclic diphosphate + CMP. It functions in the pathway isoprenoid biosynthesis; isopentenyl diphosphate biosynthesis via DXP pathway; isopentenyl diphosphate from 1-deoxy-D-xylulose 5-phosphate: step 2/6. The protein operates within isoprenoid biosynthesis; isopentenyl diphosphate biosynthesis via DXP pathway; isopentenyl diphosphate from 1-deoxy-D-xylulose 5-phosphate: step 4/6. Functionally, bifunctional enzyme that catalyzes the formation of 4-diphosphocytidyl-2-C-methyl-D-erythritol from CTP and 2-C-methyl-D-erythritol 4-phosphate (MEP) (IspD), and catalyzes the conversion of 4-diphosphocytidyl-2-C-methyl-D-erythritol 2-phosphate (CDP-ME2P) to 2-C-methyl-D-erythritol 2,4-cyclodiphosphate (ME-CPP) with a corresponding release of cytidine 5-monophosphate (CMP) (IspF). The sequence is that of Bifunctional enzyme IspD/IspF from Bartonella bacilliformis (strain ATCC 35685 / KC583 / Herrer 020/F12,63).